The chain runs to 397 residues: Phosphoglycerate kinase (397 aa).

Substrate contacts are provided by residues D19–N21, R35, H58–R61, R117, and R150. ATP is bound by residues K201, E323, and G349 to S352.

The protein belongs to the phosphoglycerate kinase family. Monomer.

It is found in the cytoplasm. It catalyses the reaction (2R)-3-phosphoglycerate + ATP = (2R)-3-phospho-glyceroyl phosphate + ADP. The protein operates within carbohydrate degradation; glycolysis; pyruvate from D-glyceraldehyde 3-phosphate: step 2/5. The chain is Phosphoglycerate kinase from Syntrophobacter fumaroxidans (strain DSM 10017 / MPOB).